The chain runs to 729 residues: Denticleless protein homolog (729 aa).

M1 carries the N-acetylmethionine modification. 3 WD repeats span residues 47–89 (GVPV…SKKT), 96–135 (AHWN…LMGT), and 138–178 (GHQC…KDGF). The short motif at 168-171 (WDTR) is the DDB1-binding motif element. The span at 189 to 198 (HNTADKQTPS) shows a compositional bias: polar residues. The tract at residues 189–212 (HNTADKQTPSKPKKKQNSKGLAPA) is disordered. Position 196 is a phosphothreonine (T196). The Nuclear localization signal signature appears at 197–203 (PSKPKKK). WD repeat units follow at residues 214–253 (DSQQ…TAYR), 269–308 (TRKL…TSPV), 313–354 (GHQN…HPPT), and 358–398 (GHSQ…EEKP). Residues 243–246 (WDLR) carry the DDB1-binding motif motif. 2 positions are modified to phosphoserine: S409 and S425. Disordered stretches follow at residues 416–445 (KACP…SSPS) and 460–491 (PSST…VSPK). A compositionally biased stretch (low complexity) spans 427–445 (STPAKAPRAKSSPSISSPS). Residues 460 to 475 (PSSTPTFSVKTTPATT) are compositionally biased toward polar residues. T463 carries the post-translational modification Phosphothreonine; by CDK1 and CDK2. Low complexity predominate over residues 476–491 (RSSVSRRGSISSVSPK). 4 positions are modified to phosphoserine: S484, S489, S494, and S511. The segment at 504-546 (VTRTPSSSPPVTPPASETKISSPRKALIPVSQKSSQADACSES) is disordered. T515 is subject to Phosphothreonine. S556 carries the phosphoserine modification. Residues 596–607 (VLSQDSEGPTKS) are compositionally biased toward polar residues. The tract at residues 596 to 705 (VLSQDSEGPT…GPVTITPSSM (110 aa)) is disordered. Composition is skewed to low complexity over residues 630–645 (EGCG…CGEG) and 674–688 (SSPR…SSRR). Phosphoserine occurs at positions 675 and 678. 2 positions are modified to phosphothreonine: T683 and T701.

It belongs to the WD repeat cdt2 family. In terms of assembly, component of the DCX(DTL) E3 ubiquitin ligase complex (also called CRL4(CDT2)), at least composed of CUL4 (CUL4A or CUL4B), DDB1, DTL/CDT2 and RBX1. Interacts with CDKN1A and DDB1. Interacts with FBXO11; SCF(FBXWO11) controls DTL stability but DCX(DTL) does not control FBXO11 stability. Interacts with CRY1. Post-translationally, ubiquitinated by the anaphase promoting complex/cyclosome (APC/C). Autoubiquitinated through 'Lys-48'-polyubiquitin chains in a PCNA-independent reaction, allowing proteasomal turnover. Polyubiquitinated by SCF(FBXO11) when not phosphorylated, leading to its degradation. A tight regulation of the polyubiquitination by SCF(FBXO11) is involved in the control of different processes such as TGF-beta signaling, cell cycle progression and exit. Phosphorylated at Thr-463 by CDK1/Cyclin B and CDK2/Cycnlin A but not by CDK2/Cyclin E, MAPK1 or PLK1. Phosphorylation at Thr-463 inhibits the interaction with FBXO11 and decreases upon cell cycle exit induced by TGF-beta or serum starvation.

Its subcellular location is the nucleus. The protein resides in the nucleus membrane. It localises to the cytoplasm. The protein localises to the cytoskeleton. It is found in the microtubule organizing center. Its subcellular location is the centrosome. The protein resides in the chromosome. Its pathway is protein modification; protein ubiquitination. Functionally, substrate-specific adapter of a DCX (DDB1-CUL4-X-box) E3 ubiquitin-protein ligase complex required for cell cycle control, DNA damage response and translesion DNA synthesis. The DCX(DTL) complex, also named CRL4(CDT2) complex, mediates the polyubiquitination and subsequent degradation of CDT1, CDKN1A/p21(CIP1), FBH1, KMT5A and SDE2. CDT1 degradation in response to DNA damage is necessary to ensure proper cell cycle regulation of DNA replication. CDKN1A/p21(CIP1) degradation during S phase or following UV irradiation is essential to control replication licensing. KMT5A degradation is also important for a proper regulation of mechanisms such as TGF-beta signaling, cell cycle progression, DNA repair and cell migration. Most substrates require their interaction with PCNA for their polyubiquitination: substrates interact with PCNA via their PIP-box, and those containing the 'K+4' motif in the PIP box, recruit the DCX(DTL) complex, leading to their degradation. In undamaged proliferating cells, the DCX(DTL) complex also promotes the 'Lys-164' monoubiquitination of PCNA, thereby being involved in PCNA-dependent translesion DNA synthesis. The DDB1-CUL4A-DTL E3 ligase complex regulates the circadian clock function by mediating the ubiquitination and degradation of CRY1. This Mus musculus (Mouse) protein is Denticleless protein homolog (Dtl).